The chain runs to 862 residues: C-type lectin domain-containing protein 161 (862 aa).

Residues 1 to 20 (MYRRTTLWFLLLFQPILVFA) form the signal peptide. 2 N-linked (GlcNAc...) asparagine glycosylation sites follow: N22 and N91. The C-type lectin 1 domain maps to 41–154 (SLNACFKLYN…VGQKLPFVCT (114 aa)). A disulfide bridge links C62 with C153. The tract at residues 162 to 291 (AGPAPVHAMR…SDESSDEAYD (130 aa)) is disordered. Residues 198 to 218 (SDKKEKKEVASDKKKESKKDE) are compositionally biased toward basic and acidic residues. N-linked (GlcNAc...) asparagine glycosylation occurs at N222. Residues 242-252 (SDKKESSKKDE) are compositionally biased toward basic and acidic residues. N258, N279, and N352 each carry an N-linked (GlcNAc...) asparagine glycan. The span at 265 to 283 (ANAEMSASISASSANSSSD) shows a compositional bias: low complexity. 3 disordered regions span residues 377–437 (MTMR…SASL), 450–469 (ALASKSKSDSSDQSKDQKSA), and 474–504 (AVVSENKHPTKKPEDPKSTKTTTEEPDIDES). Residues 388–418 (SSSNTDSESASISESSQASEQAVMAAAMSAK) show a composition bias toward low complexity. 2 stretches are compositionally biased toward basic and acidic residues: residues 455–467 (SKSDSSDQSKDQK) and 478–491 (ENKHPTKKPEDPKS). An N-linked (GlcNAc...) asparagine glycan is attached at N559. C-type lectin domains follow at residues 562-687 (APAL…SVLC) and 716-828 (KNGK…FVSV). C653 and C678 are oxidised to a cystine. A glycan (N-linked (GlcNAc...) asparagine) is linked at N765. C807 and C819 are disulfide-bonded. N-linked (GlcNAc...) asparagine glycosylation is found at N831 and N857.

It localises to the secreted. In Caenorhabditis elegans, this protein is C-type lectin domain-containing protein 161 (clec-161).